The sequence spans 528 residues: Ulvan lyase, short isoform (528 aa).

The signal sequence occupies residues 1-29; that stretch reads MKINLSMRELVSRLSTTLKTAIALSVLTA. The N-palmitoyl cysteine moiety is linked to residue C30. C30 carries the S-diacylglycerol cysteine lipid modification. 151–152 lines the substrate pocket; that stretch reads SH. H152 (proton donor/acceptor) is an active-site residue. 3 residues coordinate Ca(2+): D218, D228, and K230. 2 residues coordinate substrate: Y309 and R326. The Ca(2+) site is built by N329, D332, and F334. Substrate is bound at residue H390.

The protein belongs to the polysaccharide lyase 24 family.

The protein resides in the secreted. Its subcellular location is the cell membrane. Functionally, ulvan lyase involved in ulvan degradation. Ulvan is the main polysaccharide component of the Ulvales (green seaweed) cell wall. It is composed of disaccharide building blocks comprising 3-sulfated rhamnose (Rha3S) linked to D-glucuronic acid (GlcA), L-iduronic acid (IduA), or D-xylose (Xyl). Ulvan lyase catalyzes preferentially the endolytic cleavage of the glycosidic bond between Rha3S and the uronic acid GlcA, but not IduA, producing oligosaccharides that have unsaturated 4-deoxy-L-threo-hex-4-enopyranosiduronic acid (deltaUA) at the non-reducing end. The most abundant end products in the degradation of the ulvan polysaccharide were deltaUA-Rha3S disaccharides and deltaUA-Rha3S-IduA-Rha3S and deltaUA-Rha3S-Xyl-Rha3S tetrasaccharides. The protein is Ulvan lyase, short isoform of Alteromonas sp. (strain LOR).